A 190-amino-acid chain; its full sequence is uncharacterized protein (190 aa).

Residues 12 to 34 (LLGLSIFLTTFLFVANFLPGIFA) traverse the membrane as a helical segment.

It localises to the membrane. This is an uncharacterized protein from Archaeoglobus fulgidus (strain ATCC 49558 / DSM 4304 / JCM 9628 / NBRC 100126 / VC-16).